Reading from the N-terminus, the 86-residue chain is Conotoxin Ec15a (86 aa).

The first 23 residues, 1 to 23, serve as a signal peptide directing secretion; the sequence is MEKLTILILVATVLLAIQVLGQG. Residues 24-49 constitute a propeptide that is removed on maturation; it reads EGEKPPKEWVQQYAAKRLWALMKGPR. Pyrrolidone carboxylic acid is present on Gln-50.

This sequence belongs to the conotoxin O2 superfamily. Contains 4 disulfide bonds. In terms of tissue distribution, expressed by the venom duct.

It localises to the secreted. The polypeptide is Conotoxin Ec15a (Conus emaciatus (False virgin cone)).